The chain runs to 186 residues: Ribonuclease HII (186 aa).

The RNase H type-2 domain maps to 2-186; the sequence is KILAGVDEVG…KTFSPISDLL (185 aa). A divalent metal cation-binding residues include Asp-8, Glu-9, and Asp-99.

The protein belongs to the RNase HII family. The cofactor is Mn(2+). Mg(2+) serves as cofactor.

It is found in the cytoplasm. The catalysed reaction is Endonucleolytic cleavage to 5'-phosphomonoester.. Functionally, endonuclease that specifically degrades the RNA of RNA-DNA hybrids. The chain is Ribonuclease HII from Pelagibacter ubique (strain HTCC1062).